The sequence spans 244 residues: Phosphoadenosine 5'-phosphosulfate reductase (244 aa).

C239 acts as the Nucleophile; cysteine thiosulfonate intermediate in catalysis.

The protein belongs to the PAPS reductase family. CysH subfamily.

It is found in the cytoplasm. It catalyses the reaction [thioredoxin]-disulfide + sulfite + adenosine 3',5'-bisphosphate + 2 H(+) = [thioredoxin]-dithiol + 3'-phosphoadenylyl sulfate. It participates in sulfur metabolism; hydrogen sulfide biosynthesis; sulfite from sulfate: step 3/3. In terms of biological role, catalyzes the formation of sulfite from phosphoadenosine 5'-phosphosulfate (PAPS) using thioredoxin as an electron donor. The protein is Phosphoadenosine 5'-phosphosulfate reductase of Serratia proteamaculans (strain 568).